A 68-amino-acid chain; its full sequence is U-actitoxin-Avt1 (68 aa).

The N-terminal stretch at 1–22 (MNSKAIISVFLIMLVVVSCTQA) is a signal peptide. A propeptide spanning residues 23–40 (TYETEDDDEPGPRHSEKR) is cleaved from the precursor. A disordered region spans residues 24-50 (YETEDDDEPGPRHSEKRSCARGCGGDS). A compositionally biased stretch (basic and acidic residues) spans 32 to 41 (PGPRHSEKRS). 3 cysteine pairs are disulfide-bonded: Cys42–Cys54, Cys46–Cys59, and Cys52–Cys66.

Its function is as follows. Stable protein with probable toxin activity. Does not show activity on all channels tested. Shows no hemolytic activity on rat erythrocytes. In Aulactinia veratra (Green snakelock anemone), this protein is U-actitoxin-Avt1.